The primary structure comprises 170 residues: Peptide deformylase (170 aa).

The Fe cation site is built by cysteine 92 and histidine 134. The active site involves glutamate 135. Histidine 138 lines the Fe cation pocket.

Belongs to the polypeptide deformylase family. Fe(2+) serves as cofactor.

It catalyses the reaction N-terminal N-formyl-L-methionyl-[peptide] + H2O = N-terminal L-methionyl-[peptide] + formate. In terms of biological role, removes the formyl group from the N-terminal Met of newly synthesized proteins. Requires at least a dipeptide for an efficient rate of reaction. N-terminal L-methionine is a prerequisite for activity but the enzyme has broad specificity at other positions. This is Peptide deformylase from Chromohalobacter salexigens (strain ATCC BAA-138 / DSM 3043 / CIP 106854 / NCIMB 13768 / 1H11).